The following is a 186-amino-acid chain: Adenylate kinase (186 aa).

10-15 (GVGKGT) serves as a coordination point for ATP. The tract at residues 30-59 (STGDIFRYNIKNKTELGLEAMSYTDKGELV) is NMP. Residues Thr31, Arg36, 57–59 (ELV), 85–88 (GYPR), and Gln92 each bind AMP. Residues 126-136 (KRAAEQGRADD) are LID. Arg127 contacts ATP. Residues Arg133 and Arg144 each coordinate AMP. Gly172 lines the ATP pocket.

The protein belongs to the adenylate kinase family. In terms of assembly, monomer.

Its subcellular location is the cytoplasm. The enzyme catalyses AMP + ATP = 2 ADP. It participates in purine metabolism; AMP biosynthesis via salvage pathway; AMP from ADP: step 1/1. Functionally, catalyzes the reversible transfer of the terminal phosphate group between ATP and AMP. Plays an important role in cellular energy homeostasis and in adenine nucleotide metabolism. This chain is Adenylate kinase, found in Bifidobacterium longum (strain NCC 2705).